We begin with the raw amino-acid sequence, 420 residues long: Serine hydroxymethyltransferase (420 aa).

(6S)-5,6,7,8-tetrahydrofolate-binding positions include L121 and 125–127; that span reads GHL. An N6-(pyridoxal phosphate)lysine modification is found at K229.

The protein belongs to the SHMT family. As to quaternary structure, homodimer. It depends on pyridoxal 5'-phosphate as a cofactor.

The protein resides in the cytoplasm. It catalyses the reaction (6R)-5,10-methylene-5,6,7,8-tetrahydrofolate + glycine + H2O = (6S)-5,6,7,8-tetrahydrofolate + L-serine. It functions in the pathway one-carbon metabolism; tetrahydrofolate interconversion. It participates in amino-acid biosynthesis; glycine biosynthesis; glycine from L-serine: step 1/1. Its function is as follows. Catalyzes the reversible interconversion of serine and glycine with tetrahydrofolate (THF) serving as the one-carbon carrier. This reaction serves as the major source of one-carbon groups required for the biosynthesis of purines, thymidylate, methionine, and other important biomolecules. Also exhibits THF-independent aldolase activity toward beta-hydroxyamino acids, producing glycine and aldehydes, via a retro-aldol mechanism. The sequence is that of Serine hydroxymethyltransferase from Pasteurella multocida (strain Pm70).